Consider the following 542-residue polypeptide: L-ornithine N(5)-monooxygenase (542 aa).

FAD is bound by residues 45–53 and Q64; that span reads EKHEVFRWH. Residue K69 participates in substrate binding. 218 to 221 is an NADP(+) binding site; it reads SGQS. Residues 263–266 and N294 each bind substrate; that span reads NEIF. Position 294 to 296 (294 to 296) interacts with NADP(+); sequence NYS. Positions 443 to 472 are disordered; the sequence is FFHDSSPSTASSSTVSTPPTSPETSRFSSP. A compositionally biased stretch (low complexity) spans 447-472; the sequence is SSPSTASSSTVSTPPTSPETSRFSSP. Position 518 to 520 (518 to 520) interacts with FAD; sequence TLL. A substrate-binding site is contributed by S521.

It belongs to the lysine N(6)-hydroxylase/L-ornithine N(5)-oxygenase family. Homotetramer. The cofactor is FAD.

It catalyses the reaction L-ornithine + NADPH + O2 = N(5)-hydroxy-L-ornithine + NADP(+) + H2O. It carries out the reaction L-ornithine + NADH + O2 = N(5)-hydroxy-L-ornithine + NAD(+) + H2O. It participates in siderophore biosynthesis. L-ornithine N(5)-monooxygenase; part of the gene cluster that mediates the biosynthesis of coprinoferrin, an acylated tripeptide hydroxamate siderophore. The biosynthesis of coprinoferrin depends on the hydroxylation of ornithine to N(5)-hydroxyornithine, catalyzed by the monooxygenase cpf2. The second step, the acylation of N(5)-hydroxy-L-ornithine to yield N(5)-hexanoyl-N(5)-hydroxyl-L-ornithine is catalyzed by a not yet identified acyltransferase. Finally, assembly of coprinoferrin is catalyzed by the nonribosomal peptide synthase (NRPS) cpf1 via amide bond formation between three N(5)-hexanoyl-N(5)-hydroxyl-L-ornithine molecules to release the linear trimer. Interestingly, proteins seemingly not directly related to biosynthesis, such as transcription factors, replication factors, and autophagy-related proteins, are conserved among the clusters homologous to the coprinoferrin cluster, suggesting that the cluster may also play developmental and cell biological functions. In Coprinopsis cinerea (strain Okayama-7 / 130 / ATCC MYA-4618 / FGSC 9003) (Inky cap fungus), this protein is L-ornithine N(5)-monooxygenase.